We begin with the raw amino-acid sequence, 246 residues long: Osmotin-like protein TPM-1 (246 aa).

A signal peptide spans 1 to 21 (MAYLRSSFVFFLLAFVTYTYA). Disulfide bonds link Cys-30–Cys-225, Cys-72–Cys-82, Cys-87–Cys-93, Cys-141–Cys-213, Cys-146–Cys-196, Cys-154–Cys-164, Cys-168–Cys-177, and Cys-178–Cys-183.

Belongs to the thaumatin family.

It localises to the vacuole. The enzyme catalyses Endohydrolysis of (1-&gt;3)- or (1-&gt;4)-linkages in beta-D-glucans when the glucose residue whose reducing group is involved in the linkage to be hydrolyzed is itself substituted at C-3.. Its function is as follows. Antifungal protein that inhibits the growth of several phytopathogenic fungi (e.g. Trichothecium roseum, Fusarium oxysporum, Phytophthora citrophthora and Colletotrichum coccodes). May bind to beta-glucans and have beta-1,3-D-glucanase activity. In Solanum lycopersicum (Tomato), this protein is Osmotin-like protein TPM-1.